The chain runs to 325 residues: MVKIAVDMMGGDDAPGIVLDAVKKAVEDFKDLEIILFGDESQYNLSHERIEFRHCTEKIEMEDEPVRAIKRKKDSSMVKMAEAVKSGEADGCVSAGNTGALMSAGLFIVGRIKGVARPALVVTLPTTDGKGFVFLDVGANADAKAEHLLQYAQLGNIYAQKIRGIQNPSVSLLNIGTEAAKGNSLTKKAYDLFEKNQSFNFTGNIEAKTLMDGNVDVVVTDGYTGNMVLKNLEGTAKSIGKMLKETIMSSFKNKLAGAVLKKDLETFAKKMDYSEYGGSVLLGLDGTVVKAHGSSNAKAFYSAIKQAKIAGEENIVQIMKDTVGE.

This sequence belongs to the PlsX family. As to quaternary structure, homodimer. Probably interacts with PlsY.

The protein resides in the cytoplasm. The catalysed reaction is a fatty acyl-[ACP] + phosphate = an acyl phosphate + holo-[ACP]. It participates in lipid metabolism; phospholipid metabolism. Catalyzes the reversible formation of acyl-phosphate (acyl-PO(4)) from acyl-[acyl-carrier-protein] (acyl-ACP). This enzyme utilizes acyl-ACP as fatty acyl donor, but not acyl-CoA. The sequence is that of Phosphate acyltransferase from Staphylococcus epidermidis (strain ATCC 12228 / FDA PCI 1200).